Here is a 534-residue protein sequence, read N- to C-terminus: MQISQFNRLKRSALLFASVLLLSACQIESEPKSEFEQIQERGVLRVGTLNNQLSYYIGPDGPAGLDYELARKFAEQLGVKLEIRPAFRQAELFPALKKGDIDIIATGLNQTSQAVQRFRPGPAYYYVSQQVVYKKGQLRPRDVDQLIKYQESKDEKAGNEDSNAGAETLQIVEQSQFVPTLTALQKEHPELQFEIIGDADTRDLLKHVSTGELRFTVTDSVELSLAQRLYPDLALAFELTEDQPVSWFTRRSEDESLYAMLIEFFGNIKQSGELATLEEKYIGHIEAFDYVDTRAFIRALDNTLPKWSPLFQKYSEEFDWRLIAALAYQESHWKPKAKSPTGVRGMMMLTLPTAKSVGVTDRLDPEQSVRGGVEYLRRIVARVPDSINEHEKIWFALASYNVGYGHMMDARRLTKAQGGDPNAWADVKERLPLLRQKRYYSQTRYGYARGDEARNYVENIRRYYQSIIGHVSQKPAIDEDTEDLQVIPPLDPNLLVSGAVETLAEQVSGAVEVTPPPEENAPQEAEQTPVPKAE.

The first 24 residues, 1–24, serve as a signal peptide directing secretion; that stretch reads MQISQFNRLKRSALLFASVLLLSA. Positions 25–285 are non-LT domain; the sequence is CQIESEPKSE…TLEEKYIGHI (261 aa). Positions 287–534 are LT domain; sequence AFDYVDTRAF…AEQTPVPKAE (248 aa). Glu-330 is an active-site residue. The tract at residues 507-534 is disordered; that stretch reads VSGAVEVTPPPEENAPQEAEQTPVPKAE. Positions 520–534 are enriched in low complexity; that stretch reads NAPQEAEQTPVPKAE.

In the N-terminal section; belongs to the bacterial solute-binding protein 3 family. It in the C-terminal section; belongs to the transglycosylase Slt family.

It localises to the cell outer membrane. The catalysed reaction is Exolytic cleavage of the (1-&gt;4)-beta-glycosidic linkage between N-acetylmuramic acid (MurNAc) and N-acetylglucosamine (GlcNAc) residues in peptidoglycan, from either the reducing or the non-reducing ends of the peptidoglycan chains, with concomitant formation of a 1,6-anhydrobond in the MurNAc residue.. In terms of biological role, murein-degrading enzyme that degrades murein glycan strands and insoluble, high-molecular weight murein sacculi, with the concomitant formation of a 1,6-anhydromuramoyl product. Lytic transglycosylases (LTs) play an integral role in the metabolism of the peptidoglycan (PG) sacculus. Their lytic action creates space within the PG sacculus to allow for its expansion as well as for the insertion of various structures such as secretion systems and flagella. In Vibrio campbellii (strain ATCC BAA-1116), this protein is Membrane-bound lytic murein transglycosylase F.